Here is a 259-residue protein sequence, read N- to C-terminus: Flap endonuclease Xni (259 aa).

Mg(2+) is bound at residue Asp109. The 5'-3' exonuclease domain maps to 165–255 (VKPQQLSDYW…FNLQDLRFTA (91 aa)). K(+) contacts are provided by Leu176, Ile187, and Ile190. The interaction with DNA stretch occupies residues 189–194 (GIGPKA).

Belongs to the Xni family. The cofactor is Mg(2+). It depends on K(+) as a cofactor.

Has flap endonuclease activity. During DNA replication, flap endonucleases cleave the 5'-overhanging flap structure that is generated by displacement synthesis when DNA polymerase encounters the 5'-end of a downstream Okazaki fragment. This chain is Flap endonuclease Xni, found in Vibrio vulnificus (strain YJ016).